The primary structure comprises 558 residues: Polysialic acid transport protein KpsD (558 aa).

The signal sequence occupies residues 1 to 20 (MKLFKSILLIAACHAAQASA).

To E.coli K1 KpsD.

Its subcellular location is the periplasm. Its function is as follows. Involved in the translocation of the polysialic acid capsule across the outer membrane to the cell surface. May function as the periplasmic binding element of the PSA transport system, in which it transiently interacts with the membrane component of the transporter, binds polysaccharide and transports the polymer to a component in the outer membrane. The polypeptide is Polysialic acid transport protein KpsD (kpsD) (Escherichia coli).